Consider the following 154-residue polypeptide: Fimbrial protein (154 aa).

Positions 1 to 6 (MNAQKG) are cleaved as a propeptide — leader sequence. Phe7 bears the N-methylphenylalanine mark. The helical transmembrane segment at 7–29 (FTLIELMIVIAIIGILAAIALPA) threads the bilayer.

This sequence belongs to the N-Me-Phe pilin family. As to quaternary structure, the pili are polar flexible filaments of about 5.4 nanometers diameter and 2.5 micrometers average length; they consist of only a single polypeptide chain arranged in a helical configuration of five subunits per turn in the assembled pilus.

It localises to the fimbrium. It is found in the membrane. In Moraxella nonliquefaciens, this protein is Fimbrial protein (tfpA).